A 783-amino-acid chain; its full sequence is DNA ligase (783 aa).

Residues Asp42–Asp46, Ser91–Leu92, and Glu125 contribute to the NAD(+) site. Catalysis depends on Lys127, which acts as the N6-AMP-lysine intermediate. Positions 148, 185, 302, and 326 each coordinate NAD(+). 4 residues coordinate Zn(2+): Cys421, Cys423, Cys445, and Cys451. In terms of domain architecture, BRCT spans Lys705–Gly783.

Belongs to the NAD-dependent DNA ligase family. LigA subfamily. The cofactor is Mg(2+). Mn(2+) serves as cofactor.

It carries out the reaction NAD(+) + (deoxyribonucleotide)n-3'-hydroxyl + 5'-phospho-(deoxyribonucleotide)m = (deoxyribonucleotide)n+m + AMP + beta-nicotinamide D-nucleotide.. In terms of biological role, DNA ligase that catalyzes the formation of phosphodiester linkages between 5'-phosphoryl and 3'-hydroxyl groups in double-stranded DNA using NAD as a coenzyme and as the energy source for the reaction. It is essential for DNA replication and repair of damaged DNA. This Caulobacter vibrioides (strain ATCC 19089 / CIP 103742 / CB 15) (Caulobacter crescentus) protein is DNA ligase.